Consider the following 110-residue polypeptide: U1-lycotoxin-Ls1kk (110 aa).

Residues 1–20 (MKFVLLFGVLLVTLFSYSSA) form the signal peptide. Residues 21-44 (EMFDDFDQADEDELLSLIEKEEAR) constitute a propeptide that is removed on maturation. Cystine bridges form between C47–C62, C54–C71, C61–C89, and C73–C87.

It belongs to the neurotoxin 19 (CSTX) family. 03 subfamily. In terms of tissue distribution, expressed by the venom gland.

It localises to the secreted. The polypeptide is U1-lycotoxin-Ls1kk (Lycosa singoriensis (Wolf spider)).